A 639-amino-acid chain; its full sequence is Chaperone protein HtpG (639 aa).

The segment at 1–347 (MSQQETHGFQ…SNDLPLNVSR (347 aa)) is a; substrate-binding. The segment at 348-564 (EILQDNKVTT…EGEMSTQMIK (217 aa)) is b. A c region spans residues 565–639 (LMQAAGQDVP…MNQMLLASVK (75 aa)).

This sequence belongs to the heat shock protein 90 family. In terms of assembly, homodimer.

The protein resides in the cytoplasm. In terms of biological role, molecular chaperone. Has ATPase activity. The polypeptide is Chaperone protein HtpG (Shewanella halifaxensis (strain HAW-EB4)).